The following is a 414-amino-acid chain: Cytochrome c biogenesis protein Ccs1 (414 aa).

Transmembrane regions (helical) follow at residues 14 to 34 (LTVA…GTVI), 73 to 93 (SWWF…CTIT), and 159 to 179 (VSPI…MLST).

The protein belongs to the Ccs1/CcsB family. As to quaternary structure, may interact with CcsA.

It localises to the plastid. It is found in the chloroplast thylakoid membrane. In terms of biological role, required during biogenesis of c-type cytochromes (cytochrome c6 and cytochrome f) at the step of heme attachment. In Guillardia theta (Cryptophyte), this protein is Cytochrome c biogenesis protein Ccs1.